The sequence spans 343 residues: Biotin synthase 2 (343 aa).

In terms of domain architecture, Radical SAM core spans 58–285 (NEVQLSTLLS…LTMVRLSAGR (228 aa)). Positions 73, 77, and 80 each coordinate [4Fe-4S] cluster. Positions 117, 148, 208, and 280 each coordinate [2Fe-2S] cluster.

Belongs to the radical SAM superfamily. Biotin synthase family. As to quaternary structure, homodimer. [4Fe-4S] cluster serves as cofactor. [2Fe-2S] cluster is required as a cofactor.

The enzyme catalyses (4R,5S)-dethiobiotin + (sulfur carrier)-SH + 2 reduced [2Fe-2S]-[ferredoxin] + 2 S-adenosyl-L-methionine = (sulfur carrier)-H + biotin + 2 5'-deoxyadenosine + 2 L-methionine + 2 oxidized [2Fe-2S]-[ferredoxin]. The protein operates within cofactor biosynthesis; biotin biosynthesis; biotin from 7,8-diaminononanoate: step 2/2. Its function is as follows. Catalyzes the conversion of dethiobiotin (DTB) to biotin by the insertion of a sulfur atom into dethiobiotin via a radical-based mechanism. This chain is Biotin synthase 2, found in Polaromonas sp. (strain JS666 / ATCC BAA-500).